We begin with the raw amino-acid sequence, 1082 residues long: Carbamoyl phosphate synthase large chain (1082 aa).

The segment at 1–401 is carboxyphosphate synthetic domain; that stretch reads MPKDKALKKV…ALLKAVRSLE (401 aa). Arg-129, Arg-169, Gly-175, Gly-176, Lys-208, Val-210, Glu-215, Gly-241, Ile-242, His-243, Gln-284, and Glu-298 together coordinate ATP. The ATP-grasp 1 domain occupies 133-327; the sequence is KNMCLEIGEP…IAKVATKVAV (195 aa). Mg(2+) is bound by residues Gln-284, Glu-298, and Asn-300. Mn(2+) is bound by residues Gln-284, Glu-298, and Asn-300. The oligomerization domain stretch occupies residues 402 to 561; the sequence is TGVTGMNLPE…YSTYEDEDEA (160 aa). Residues 562 to 944 form a carbamoyl phosphate synthetic domain region; the sequence is EPQAVRKVVV…ALYKACLSAG (383 aa). The ATP-grasp 2 domain maps to 686 to 876; sequence DQLVAELGIP…MVNLATRICL (191 aa). Residues Arg-722, Lys-761, Leu-763, Glu-767, Gly-792, Ile-793, His-794, Ser-795, Gln-835, and Glu-847 each coordinate ATP. Mg(2+) is bound by residues Gln-835, Glu-847, and Asn-849. Residues Gln-835, Glu-847, and Asn-849 each contribute to the Mn(2+) site. The MGS-like domain maps to 945–1082; sequence YTLPSSGKAV…PLIPLQEYVS (138 aa). Positions 945 to 1082 are allosteric domain; sequence YTLPSSGKAV…PLIPLQEYVS (138 aa).

Belongs to the CarB family. In terms of assembly, composed of two chains; the small (or glutamine) chain promotes the hydrolysis of glutamine to ammonia, which is used by the large (or ammonia) chain to synthesize carbamoyl phosphate. Tetramer of heterodimers (alpha,beta)4. It depends on Mg(2+) as a cofactor. Mn(2+) is required as a cofactor.

It catalyses the reaction hydrogencarbonate + L-glutamine + 2 ATP + H2O = carbamoyl phosphate + L-glutamate + 2 ADP + phosphate + 2 H(+). The catalysed reaction is hydrogencarbonate + NH4(+) + 2 ATP = carbamoyl phosphate + 2 ADP + phosphate + 2 H(+). The protein operates within amino-acid biosynthesis; L-arginine biosynthesis; carbamoyl phosphate from bicarbonate: step 1/1. It functions in the pathway pyrimidine metabolism; UMP biosynthesis via de novo pathway; (S)-dihydroorotate from bicarbonate: step 1/3. Large subunit of the glutamine-dependent carbamoyl phosphate synthetase (CPSase). CPSase catalyzes the formation of carbamoyl phosphate from the ammonia moiety of glutamine, carbonate, and phosphate donated by ATP, constituting the first step of 2 biosynthetic pathways, one leading to arginine and/or urea and the other to pyrimidine nucleotides. The large subunit (synthetase) binds the substrates ammonia (free or transferred from glutamine from the small subunit), hydrogencarbonate and ATP and carries out an ATP-coupled ligase reaction, activating hydrogencarbonate by forming carboxy phosphate which reacts with ammonia to form carbamoyl phosphate. The chain is Carbamoyl phosphate synthase large chain from Desulforudis audaxviator (strain MP104C).